The sequence spans 283 residues: Shikimate dehydrogenase (NADP(+)) (283 aa).

Shikimate is bound by residues 16 to 18 (SLS) and Thr63. The Proton acceptor role is filled by Lys67. NADP(+) is bound at residue Asp79. Residues Asn88 and Asp103 each contribute to the shikimate site. NADP(+) is bound by residues 128 to 132 (GAGGA), Ala223, and Gly243.

The protein belongs to the shikimate dehydrogenase family. Homodimer.

It catalyses the reaction shikimate + NADP(+) = 3-dehydroshikimate + NADPH + H(+). It participates in metabolic intermediate biosynthesis; chorismate biosynthesis; chorismate from D-erythrose 4-phosphate and phosphoenolpyruvate: step 4/7. In terms of biological role, involved in the biosynthesis of the chorismate, which leads to the biosynthesis of aromatic amino acids. Catalyzes the reversible NADPH linked reduction of 3-dehydroshikimate (DHSA) to yield shikimate (SA). The polypeptide is Shikimate dehydrogenase (NADP(+)) (Xanthomonas campestris pv. campestris (strain 8004)).